The primary structure comprises 512 residues: 2-isopropylmalate synthase (512 aa).

A Pyruvate carboxyltransferase domain is found at 5 to 268 (LIIFDTTLRD…DLNIDTTHIV (264 aa)). Mn(2+) contacts are provided by Asp-14, His-202, His-204, and Asn-239. The interval 394–512 (AFVSLSQHSE…SQAEKVAAQG (119 aa)) is regulatory domain.

Belongs to the alpha-IPM synthase/homocitrate synthase family. LeuA type 1 subfamily. In terms of assembly, homodimer. It depends on Mn(2+) as a cofactor.

Its subcellular location is the cytoplasm. It catalyses the reaction 3-methyl-2-oxobutanoate + acetyl-CoA + H2O = (2S)-2-isopropylmalate + CoA + H(+). Its pathway is amino-acid biosynthesis; L-leucine biosynthesis; L-leucine from 3-methyl-2-oxobutanoate: step 1/4. Catalyzes the condensation of the acetyl group of acetyl-CoA with 3-methyl-2-oxobutanoate (2-ketoisovalerate) to form 3-carboxy-3-hydroxy-4-methylpentanoate (2-isopropylmalate). This is 2-isopropylmalate synthase from Variovorax paradoxus (strain S110).